A 303-amino-acid chain; its full sequence is Probable 5-dehydro-4-deoxyglucarate dehydratase (303 aa).

This sequence belongs to the DapA family.

It catalyses the reaction 5-dehydro-4-deoxy-D-glucarate + H(+) = 2,5-dioxopentanoate + CO2 + H2O. It functions in the pathway carbohydrate acid metabolism; D-glucarate degradation; 2,5-dioxopentanoate from D-glucarate: step 2/2. This chain is Probable 5-dehydro-4-deoxyglucarate dehydratase, found in Agrobacterium fabrum (strain C58 / ATCC 33970) (Agrobacterium tumefaciens (strain C58)).